A 441-amino-acid polypeptide reads, in one-letter code: Ribosomal protein uS12 methylthiotransferase RimO (441 aa).

Positions 5-116 (PTIAFTHLGC…IVDVMQRVEK (112 aa)) constitute an MTTase N-terminal domain. Positions 14, 50, 79, 154, 158, and 161 each coordinate [4Fe-4S] cluster. The 231-residue stretch at 140–370 (TTSEGVAYVR…EVQQSISWQQ (231 aa)) folds into the Radical SAM core domain. Residues 372–438 (QKLVGQLVDV…IYDLYGCLIS (67 aa)) enclose the TRAM domain.

The protein belongs to the methylthiotransferase family. RimO subfamily. Requires [4Fe-4S] cluster as cofactor.

Its subcellular location is the cytoplasm. The enzyme catalyses L-aspartate(89)-[ribosomal protein uS12]-hydrogen + (sulfur carrier)-SH + AH2 + 2 S-adenosyl-L-methionine = 3-methylsulfanyl-L-aspartate(89)-[ribosomal protein uS12]-hydrogen + (sulfur carrier)-H + 5'-deoxyadenosine + L-methionine + A + S-adenosyl-L-homocysteine + 2 H(+). Its function is as follows. Catalyzes the methylthiolation of an aspartic acid residue of ribosomal protein uS12. This chain is Ribosomal protein uS12 methylthiotransferase RimO, found in Trichodesmium erythraeum (strain IMS101).